Reading from the N-terminus, the 250-residue chain is Flavin-dependent thymidylate synthase (250 aa).

The 227-residue stretch at 7 to 233 folds into the ThyX domain; the sequence is LSVELIACSS…PTVFGDFEIE (227 aa). Residues 92–95, 103–107, and Arg-172 contribute to the dUMP site; these read ELVR and QLSQR. Residues 95–97 and Gln-103 contribute to the FAD site; that span reads RHR. The ThyX motif motif lies at 95-105; the sequence is RHRHFSFSQLS. FAD is bound by residues 188–190 and His-194; that span reads NFR. A dUMP-binding site is contributed by Arg-199. The active-site Involved in ionization of N3 of dUMP, leading to its activation is the Arg-199.

This sequence belongs to the thymidylate synthase ThyX family. As to quaternary structure, homotetramer. FAD serves as cofactor.

It catalyses the reaction dUMP + (6R)-5,10-methylene-5,6,7,8-tetrahydrofolate + NADPH + H(+) = dTMP + (6S)-5,6,7,8-tetrahydrofolate + NADP(+). The protein operates within pyrimidine metabolism; dTTP biosynthesis. Functionally, catalyzes the reductive methylation of 2'-deoxyuridine-5'-monophosphate (dUMP) to 2'-deoxythymidine-5'-monophosphate (dTMP) while utilizing 5,10-methylenetetrahydrofolate (mTHF) as the methyl donor, and NADPH and FADH(2) as the reductant. The protein is Flavin-dependent thymidylate synthase of Corynebacterium glutamicum (strain ATCC 13032 / DSM 20300 / JCM 1318 / BCRC 11384 / CCUG 27702 / LMG 3730 / NBRC 12168 / NCIMB 10025 / NRRL B-2784 / 534).